The chain runs to 553 residues: Meiotic expression up-regulated protein 18 (553 aa).

The disordered stretch occupies residues 267–305; sequence SNETLCSNDSKHRIARLKNEDNTQKPISKKRKSKKASHK. Basic and acidic residues predominate over residues 275-289; sequence DSKHRIARLKNEDNT. The span at 293–304 shows a compositional bias: basic residues; sequence ISKKRKSKKASH.

The polypeptide is Meiotic expression up-regulated protein 18 (meu18) (Schizosaccharomyces pombe (strain 972 / ATCC 24843) (Fission yeast)).